Here is a 1004-residue protein sequence, read N- to C-terminus: Protein CHUP1, chloroplastic (1004 aa).

The tract at residues 1 to 25 (MFVRIGFVVAASIAAVTVKRLNVKP) is required for chloroplast localization. The interval 22-63 (NVKPSKPSKPSDNGEGGDKEQSVDPDYNLNDKNLQEEEEEEE) is disordered. Residues 123–341 (EMAYNDGELE…KQVEGLQMNR (219 aa)) adopt a coiled-coil conformation. Positions 269 to 290 (LEVQVMELKRKNRELQHEKREL) are leucine-zipper 1. 4 disordered regions span residues 398-482 (GSER…SMNK), 504-536 (FGQV…GEGL), 612-718 (TATG…GNKV), and 736-755 (SKKE…SSAA). The residue at position 399 (Ser399) is a Phosphoserine. Positions 409 to 419 (ESNYSQPSSPG) are enriched in polar residues. Residues 427-439 (SMDSSTSRFSSFS) show a composition bias toward low complexity. Composition is skewed to polar residues over residues 504-517 (FGQV…TPET) and 612-624 (TATG…SNES). Residues 670-706 (ARPPLPGGGPPPPPPPPGGGPPPPPGGGPPPPPPPPG) show a composition bias toward pro residues. Polar residues predominate over residues 744 to 755 (LISSGTGNSSAA). Residues 802 to 823 (LLAFVSWLDEELSFLVDERAVL) form a leucine-zipper 2 region. Residues 979–1004 (RSRAKTESGDNNNNNNNNSNEEESVN) form a disordered region.

In terms of tissue distribution, expressed in cauline leaves, rosette leaves, stems and flowers, but not in roots.

It is found in the plastid. The protein resides in the chloroplast outer membrane. Functionally, required for the positioning and movement of chloroplasts. Interacts with profilin and actin independent of its polymerization status. Regulates chloroplast localization by anchoring chloroplasts to the plasma membrane and forming a bridge to the actin cytoskeleton. The chain is Protein CHUP1, chloroplastic (CHUP1) from Arabidopsis thaliana (Mouse-ear cress).